A 251-amino-acid polypeptide reads, in one-letter code: Triosephosphate isomerase (251 aa).

9–11 lines the substrate pocket; the sequence is NWK. Catalysis depends on His-94, which acts as the Electrophile. Glu-166 acts as the Proton acceptor in catalysis. Residues Gly-172, Ser-211, and 232 to 233 each bind substrate; that span reads GG.

Belongs to the triosephosphate isomerase family. In terms of assembly, homodimer.

The protein localises to the cytoplasm. It catalyses the reaction D-glyceraldehyde 3-phosphate = dihydroxyacetone phosphate. The protein operates within carbohydrate biosynthesis; gluconeogenesis. It functions in the pathway carbohydrate degradation; glycolysis; D-glyceraldehyde 3-phosphate from glycerone phosphate: step 1/1. Involved in the gluconeogenesis. Catalyzes stereospecifically the conversion of dihydroxyacetone phosphate (DHAP) to D-glyceraldehyde-3-phosphate (G3P). This Xanthomonas euvesicatoria pv. vesicatoria (strain 85-10) (Xanthomonas campestris pv. vesicatoria) protein is Triosephosphate isomerase.